The chain runs to 434 residues: Nicotinate phosphoribosyltransferase (434 aa).

His-242 carries the phosphohistidine; by autocatalysis modification.

It belongs to the NAPRTase family. Transiently phosphorylated on a His residue during the reaction cycle. Phosphorylation strongly increases the affinity for substrates and increases the rate of nicotinate D-ribonucleotide production. Dephosphorylation regenerates the low-affinity form of the enzyme, leading to product release.

It carries out the reaction nicotinate + 5-phospho-alpha-D-ribose 1-diphosphate + ATP + H2O = nicotinate beta-D-ribonucleotide + ADP + phosphate + diphosphate. It functions in the pathway cofactor biosynthesis; NAD(+) biosynthesis; nicotinate D-ribonucleotide from nicotinate: step 1/1. In terms of biological role, catalyzes the synthesis of beta-nicotinate D-ribonucleotide from nicotinate and 5-phospho-D-ribose 1-phosphate at the expense of ATP. The chain is Nicotinate phosphoribosyltransferase from Bradyrhizobium diazoefficiens (strain JCM 10833 / BCRC 13528 / IAM 13628 / NBRC 14792 / USDA 110).